A 71-amino-acid polypeptide reads, in one-letter code: DNA-directed RNA polymerase subunit omega (71 aa).

The protein belongs to the RNA polymerase subunit omega family. As to quaternary structure, the RNAP catalytic core consists of 2 alpha, 1 beta, 1 beta' and 1 omega subunit. When a sigma factor is associated with the core the holoenzyme is formed, which can initiate transcription.

The enzyme catalyses RNA(n) + a ribonucleoside 5'-triphosphate = RNA(n+1) + diphosphate. Its function is as follows. Promotes RNA polymerase assembly. Latches the N- and C-terminal regions of the beta' subunit thereby facilitating its interaction with the beta and alpha subunits. The polypeptide is DNA-directed RNA polymerase subunit omega (Campylobacter curvus (strain 525.92)).